A 256-amino-acid chain; its full sequence is Large ribosomal subunit protein bL28m (256 aa).

The N-terminal 55 residues, 1 to 55 (MPLHKYPVWLWKRLQLREGICSRLPGHYLRSLEEERTPTPVHYRPHGAKFKINPK), are a transit peptide targeting the mitochondrion.

Belongs to the bacterial ribosomal protein bL28 family. As to quaternary structure, component of the mitochondrial large ribosomal subunit (mt-LSU). Mature mammalian 55S mitochondrial ribosomes consist of a small (28S) and a large (39S) subunit. The 28S small subunit contains a 12S ribosomal RNA (12S mt-rRNA) and 30 different proteins. The 39S large subunit contains a 16S rRNA (16S mt-rRNA), a copy of mitochondrial valine transfer RNA (mt-tRNA(Val)), which plays an integral structural role, and 52 different proteins. Interacts with OXA1L. In terms of tissue distribution, found in a variety of normal tissues including spleen, testes, thymus, liver, kidney, brain, adrenal, lung and retinal tissue.

It localises to the mitochondrion. The sequence is that of Large ribosomal subunit protein bL28m (MRPL28) from Homo sapiens (Human).